We begin with the raw amino-acid sequence, 746 residues long: Protein C-mannosyl-transferase DPY19L1 (746 aa).

Residues 1–68 form a disordered region; the sequence is MVLQARSKHR…RAGTAAPAPD (68 aa). Residues serine 28 and serine 31 each carry the phosphoserine modification. A compositionally biased stretch (low complexity) spans 59–68; it reads RAGTAAPAPD. Helical transmembrane passes span 137 to 159, 227 to 247, 257 to 279, 307 to 325, 331 to 350, 357 to 374, 380 to 396, 405 to 425, 481 to 501, 520 to 540, and 562 to 582; these read LYYS…WMIM, ACFY…LFFI, LGGV…VMWT, LCRG…FMLP, FVLL…GYID, IIYM…LMFG, TSYY…MLAM, VSEL…TVIL, LLLP…FNDM, GELV…VLIM, and LFGW…ILAA.

Belongs to the dpy-19 family.

It is found in the endoplasmic reticulum membrane. The enzyme catalyses L-tryptophyl-[protein] + a di-trans,poly-cis-dolichyl beta-D-mannosyl phosphate = C-alpha-D-mannosyl-L-tryptophyl-[protein] + a di-trans,poly-cis-dolichyl phosphate + H(+). Its pathway is protein modification; protein glycosylation. Functionally, C-mannosyltransferase that mediates the C-mannosylation tryptophan residues on target proteins. The reaction occurs on the luminal side of the endoplasmic reticulum and involves the transfer of a mannose unit from a dolichylphosphate mannose (Dol-P-Man) donor to an acceptor protein containing a WxxW consensus sequence. C-mannosylates the first two tryptophans in the WxxWxxWxxC sequence motif in thrombospondin (TSP) type-1 repeats of UNC5A. Regulates neurite extension during development. This chain is Protein C-mannosyl-transferase DPY19L1 (Dpy19l1), found in Mus musculus (Mouse).